The primary structure comprises 187 residues: Epididymal-specific lipocalin-10 (187 aa).

The signal sequence occupies residues 1 to 19 (MRQGLLVLALVLVLVLVLA). Cysteine 90 and cysteine 163 are joined by a disulfide. Asparagine 149 carries N-linked (GlcNAc...) asparagine glycosylation. Lysine 170 is subject to N6-acetyllysine.

Belongs to the calycin superfamily. Lipocalin family.

It is found in the secreted. Functionally, may play a role in male fertility. May act as a retinoid carrier protein within the epididymis. The sequence is that of Epididymal-specific lipocalin-10 (LCN10) from Homo sapiens (Human).